A 244-amino-acid chain; its full sequence is 7-cyano-7-deazaguanine synthase (244 aa).

14 to 24 (FSGGQDSATCV) is a binding site for ATP. Zn(2+) is bound by residues Cys202, Cys217, Cys220, and Cys223.

The protein belongs to the QueC family. The cofactor is Zn(2+).

The catalysed reaction is 7-carboxy-7-deazaguanine + NH4(+) + ATP = 7-cyano-7-deazaguanine + ADP + phosphate + H2O + H(+). The protein operates within purine metabolism; 7-cyano-7-deazaguanine biosynthesis. Its function is as follows. Catalyzes the ATP-dependent conversion of 7-carboxy-7-deazaguanine (CDG) to 7-cyano-7-deazaguanine (preQ(0)). This Burkholderia multivorans (strain ATCC 17616 / 249) protein is 7-cyano-7-deazaguanine synthase.